The primary structure comprises 376 residues: Thymidine kinase (376 aa).

The interval Met-1–Glu-39 is disordered. Positions Ser-19–Arg-32 are enriched in basic residues. Gly-56 to Thr-63 is an ATP binding site. Catalysis depends on Glu-83, which acts as the Proton acceptor. Substrate is bound by residues Tyr-101 and Gln-125. Arg-216 is an ATP binding site. A substrate-binding site is contributed by Arg-222.

It belongs to the herpesviridae thymidine kinase family. In terms of assembly, homodimer.

The enzyme catalyses thymidine + ATP = dTMP + ADP + H(+). Its function is as follows. Catalyzes the transfer of the gamma-phospho group of ATP to thymidine to generate dTMP in the salvage pathway of pyrimidine synthesis. The dTMP serves as a substrate for DNA polymerase during viral DNA replication. Allows the virus to be reactivated and to grow in non-proliferative cells lacking a high concentration of phosphorylated nucleic acid precursors. In Human herpesvirus 1 (strain CL101) (HHV-1), this protein is Thymidine kinase.